We begin with the raw amino-acid sequence, 302 residues long: Sulfate adenylyltransferase subunit 2 (302 aa).

The disordered stretch occupies residues 280-302; it reads RQGRAIDHDQSGSMELKKRQGYF.

Belongs to the PAPS reductase family. CysD subfamily. In terms of assembly, heterodimer composed of CysD, the smaller subunit, and CysN.

The enzyme catalyses sulfate + ATP + H(+) = adenosine 5'-phosphosulfate + diphosphate. It participates in sulfur metabolism; hydrogen sulfide biosynthesis; sulfite from sulfate: step 1/3. Functionally, with CysN forms the ATP sulfurylase (ATPS) that catalyzes the adenylation of sulfate producing adenosine 5'-phosphosulfate (APS) and diphosphate, the first enzymatic step in sulfur assimilation pathway. APS synthesis involves the formation of a high-energy phosphoric-sulfuric acid anhydride bond driven by GTP hydrolysis by CysN coupled to ATP hydrolysis by CysD. The sequence is that of Sulfate adenylyltransferase subunit 2 from Vibrio cholerae serotype O1 (strain ATCC 39541 / Classical Ogawa 395 / O395).